The sequence spans 671 residues: Acetyl-coenzyme A synthetase 2 (671 aa).

CoA contacts are provided by residues 207 to 210 (RGGR) and Thr-326. ATP contacts are provided by residues 402–404 (GEP), 426–431 (DTYWQT), Asp-517, and Arg-532. Ser-540 is a binding site for CoA. Position 543 (Arg-543) interacts with ATP. Arg-603 is a CoA binding site.

The protein belongs to the ATP-dependent AMP-binding enzyme family.

It catalyses the reaction acetate + ATP + CoA = acetyl-CoA + AMP + diphosphate. The polypeptide is Acetyl-coenzyme A synthetase 2 (ACS2) (Candida albicans (strain SC5314 / ATCC MYA-2876) (Yeast)).